The primary structure comprises 657 residues: Probable potassium transport system protein Kup (657 aa).

The next 12 helical transmembrane spans lie at 15–35, 48–68, 100–120, 147–167, 173–193, 219–239, 251–271, 292–312, 348–368, 378–398, 403–423, and 431–451; these read SFLIALGVVYGDIGTSPLYVM, ITPDFILGVLSLIFWTMTLLT, WLIIPAMVGGSALLADGMLTP, IIIIIVLVILSFLFFIQHFGT, IFGPVMFIWFAFLAILGIVNL, LGFFILGGVFLSTTGAEALYS, LTWPLVKICLLLNYFGQAAWI, MMPSWLLLFGVLISTLAAIIA, IYMPAINRILWIACIAIVLYF, YGLSITVTMLMTSILLFNYLL, PLPIALIILVFFSSLEFSFLI, and KGGFVSVLIALCILSIMYIWI.

The protein belongs to the HAK/KUP transporter (TC 2.A.72) family.

It localises to the cell membrane. The enzyme catalyses K(+)(in) + H(+)(in) = K(+)(out) + H(+)(out). Functionally, transport of potassium into the cell. Likely operates as a K(+):H(+) symporter. The chain is Probable potassium transport system protein Kup from Clostridium perfringens (strain SM101 / Type A).